Consider the following 302-residue polypeptide: Glutaminase (302 aa).

Residues serine 61, asparagine 111, glutamate 155, asparagine 162, tyrosine 186, tyrosine 238, and valine 256 each coordinate substrate.

Belongs to the glutaminase family. Homotetramer.

It carries out the reaction L-glutamine + H2O = L-glutamate + NH4(+). This Ectopseudomonas mendocina (strain ymp) (Pseudomonas mendocina) protein is Glutaminase.